Consider the following 236-residue polypeptide: UPF0257 lipoprotein YnfC (236 aa).

An N-terminal signal peptide occupies residues 1-16 (MKKPLLLTLLCMILAG). Cysteine 17 carries the N-palmitoyl cysteine lipid modification. The S-diacylglycerol cysteine moiety is linked to residue cysteine 17.

It belongs to the UPF0257 family.

It is found in the cell membrane. The protein is UPF0257 lipoprotein YnfC of Salmonella typhi.